A 357-amino-acid polypeptide reads, in one-letter code: MSKKIVLLPGDGIGPEIVAEAKKVLEAVDAKFKLGLKFEEDLIGGCAIDVHGVPLAQSTLDRCKAADAVLMGSVGGPKWDALDSNIRPEKGLLKIRYEMGLYANLRPAILYPQLADASSLKPEIVSGLDILIVRELTGGIYFGEPRGIRLLDNGERQGYNTYVYAEHEIERIGRTAFEMAMKRDKKVCSVDKANVLEATVLWREVIQSISKDYPEVELSHMYVDNAAMQLVRAPKQFDVVVTGNMFGDILSDTAAMLTGSIGMLPSASLNQDSKGLYEPVHGSAPDIAGQGVANPLATILSAAMMLRYSLNEAAAADAIEAAVGAVLDDGLRSADIFSEGMKKVSTQEMGDAVAAKI.

76–89 lines the NAD(+) pocket; that stretch reads GPKWDALDSNIRPE. Substrate is bound by residues Arg-96, Arg-106, Arg-134, and Asp-224. Residues Asp-224, Asp-248, and Asp-252 each coordinate Mg(2+). Residue 282–294 participates in NAD(+) binding; the sequence is GSAPDIAGQGVAN.

This sequence belongs to the isocitrate and isopropylmalate dehydrogenases family. LeuB type 1 subfamily. As to quaternary structure, homodimer. Mg(2+) is required as a cofactor. Requires Mn(2+) as cofactor.

It localises to the cytoplasm. The catalysed reaction is (2R,3S)-3-isopropylmalate + NAD(+) = 4-methyl-2-oxopentanoate + CO2 + NADH. It participates in amino-acid biosynthesis; L-leucine biosynthesis; L-leucine from 3-methyl-2-oxobutanoate: step 3/4. Catalyzes the oxidation of 3-carboxy-2-hydroxy-4-methylpentanoate (3-isopropylmalate) to 3-carboxy-4-methyl-2-oxopentanoate. The product decarboxylates to 4-methyl-2 oxopentanoate. This Saccharophagus degradans (strain 2-40 / ATCC 43961 / DSM 17024) protein is 3-isopropylmalate dehydrogenase.